The primary structure comprises 210 residues: Glutathione S-transferase P (210 aa).

The GST N-terminal domain maps to 2 to 81 (PPYTIVYFPV…HLGRSLGLYG (80 aa)). Position 4 is a phosphotyrosine; by EGFR (tyrosine 4). Residues tyrosine 8, arginine 14, tryptophan 39, lysine 45, and 52–53 (QL) contribute to the glutathione site. Position 62 is a phosphothreonine (threonine 62). 65 to 66 (QS) provides a ligand contact to glutathione. Residues 83–204 (DQREAALVDM…SSPDHVNRPI (122 aa)) enclose the GST C-terminal domain. N6-succinyllysine occurs at positions 103 and 116. At lysine 128 the chain carries N6-acetyllysine.

It belongs to the GST superfamily. Pi family. Homodimer. Interacts with CDK5.

It is found in the cytoplasm. It localises to the mitochondrion. The protein localises to the nucleus. The catalysed reaction is RX + glutathione = an S-substituted glutathione + a halide anion + H(+). It catalyses the reaction prostaglandin J2 + glutathione = prostaglandin J2-S-(R)-glutathione. The enzyme catalyses prostaglandin J2 + glutathione = prostaglandin J2-S-(S)-glutathione. It carries out the reaction prostaglandin A2 + glutathione = prostaglandin A2-S-(S)-glutathione. The catalysed reaction is 11(S)-hydroxy-14(S),15(S)-epoxy-(5Z,8Z,12E)-eicosatrienoate + glutathione = (11S,15S)-dihydroxy-14(R)-S-glutathionyl-(5Z,8Z,12E)-eicosatrienoate. Conjugation of reduced glutathione to a wide number of exogenous and endogenous hydrophobic electrophiles. Involved in the formation of glutathione conjugates of both prostaglandin A2 (PGA2) and prostaglandin J2 (PGJ2). Participates in the formation of novel hepoxilin regioisomers. Negatively regulates CDK5 activity via p25/p35 translocation to prevent neurodegeneration. This chain is Glutathione S-transferase P (GSTP1), found in Cricetulus longicaudatus (Long-tailed dwarf hamster).